Here is a 329-residue protein sequence, read N- to C-terminus: Malate dehydrogenase (329 aa).

12–18 is an NAD(+) binding site; sequence GAAGQIG. Substrate contacts are provided by Arg-95 and Arg-101. NAD(+) contacts are provided by residues Asn-108, Gln-115, and 132–134; that span reads VGN. Residues Asn-134 and Arg-165 each coordinate substrate. His-190 functions as the Proton acceptor in the catalytic mechanism.

This sequence belongs to the LDH/MDH superfamily. MDH type 2 family.

It catalyses the reaction (S)-malate + NAD(+) = oxaloacetate + NADH + H(+). In terms of biological role, catalyzes the reversible oxidation of malate to oxaloacetate. This chain is Malate dehydrogenase, found in Herminiimonas arsenicoxydans.